The following is a 519-amino-acid chain: Zinc finger and BTB domain-containing protein 18.3 (519 aa).

The region spanning 24–91 is the BTB domain; it reads CDCTVLVGDA…MYEGKLQFKD (68 aa). Residues 189-227 are disordered; that stretch reads ASIPQTGGEVDTHTTAAGKTADSPCSSTGSLSHRSATSM. Residues 201 to 227 are compositionally biased toward polar residues; the sequence is HTTAAGKTADSPCSSTGSLSHRSATSM. C2H2-type zinc fingers lie at residues 367–389, 407–429, 435–457, and 463–486; these read FMCP…LSTH, PTCS…ERTH, FTCT…AVVH, and HACK…RKFH.

It belongs to the krueppel C2H2-type zinc-finger protein family. ZBTB18 subfamily.

It localises to the nucleus. In terms of biological role, transcriptional repressor that plays a role in various developmental processes. Specifically binds the consensus DNA sequence 5'-[AC]ACATCTG[GT][AC]-3' which contains the E box core, and acts by recruiting chromatin remodeling multiprotein complexes. This Xenopus laevis (African clawed frog) protein is Zinc finger and BTB domain-containing protein 18.3 (zbtb18.3).